Consider the following 321-residue polypeptide: tRNA-dihydrouridine synthase B (321 aa).

FMN is bound by residues 16-18 (PMA) and Gln70. Cys100 functions as the Proton donor in the catalytic mechanism. FMN is bound by residues Lys139, 200 to 202 (NGD), and 224 to 225 (GR).

Belongs to the Dus family. DusB subfamily. It depends on FMN as a cofactor.

The catalysed reaction is a 5,6-dihydrouridine in tRNA + NAD(+) = a uridine in tRNA + NADH + H(+). It carries out the reaction a 5,6-dihydrouridine in tRNA + NADP(+) = a uridine in tRNA + NADPH + H(+). In terms of biological role, catalyzes the synthesis of 5,6-dihydrouridine (D), a modified base found in the D-loop of most tRNAs, via the reduction of the C5-C6 double bond in target uridines. The polypeptide is tRNA-dihydrouridine synthase B (Escherichia coli O157:H7).